The sequence spans 339 residues: Ketol-acid reductoisomerase (NADP(+)) (339 aa).

The KARI N-terminal Rossmann domain maps to 1–182 (MRVYYDRDAD…GGGRSGIIET (182 aa)). Residues 24–27 (YGSQ), Lys-48, Ser-51, Thr-53, and 83–86 (DELQ) contribute to the NADP(+) site. His-108 is an active-site residue. Gly-134 is an NADP(+) binding site. The KARI C-terminal knotted domain maps to 183–328 (NFKEECETDL…AKLRGMMPWI (146 aa)). Mg(2+) is bound by residues Asp-191, Glu-195, Glu-227, and Glu-231. Ser-252 contributes to the substrate binding site.

The protein belongs to the ketol-acid reductoisomerase family. The cofactor is Mg(2+).

The catalysed reaction is (2R)-2,3-dihydroxy-3-methylbutanoate + NADP(+) = (2S)-2-acetolactate + NADPH + H(+). It carries out the reaction (2R,3R)-2,3-dihydroxy-3-methylpentanoate + NADP(+) = (S)-2-ethyl-2-hydroxy-3-oxobutanoate + NADPH + H(+). It functions in the pathway amino-acid biosynthesis; L-isoleucine biosynthesis; L-isoleucine from 2-oxobutanoate: step 2/4. Its pathway is amino-acid biosynthesis; L-valine biosynthesis; L-valine from pyruvate: step 2/4. Its function is as follows. Involved in the biosynthesis of branched-chain amino acids (BCAA). Catalyzes an alkyl-migration followed by a ketol-acid reduction of (S)-2-acetolactate (S2AL) to yield (R)-2,3-dihydroxy-isovalerate. In the isomerase reaction, S2AL is rearranged via a Mg-dependent methyl migration to produce 3-hydroxy-3-methyl-2-ketobutyrate (HMKB). In the reductase reaction, this 2-ketoacid undergoes a metal-dependent reduction by NADPH to yield (R)-2,3-dihydroxy-isovalerate. The sequence is that of Ketol-acid reductoisomerase (NADP(+)) from Agrobacterium fabrum (strain C58 / ATCC 33970) (Agrobacterium tumefaciens (strain C58)).